We begin with the raw amino-acid sequence, 241 residues long: tRNA (guanine-N(1)-)-methyltransferase (241 aa).

S-adenosyl-L-methionine contacts are provided by residues glycine 112 and 131–136 (LGDFVL).

Belongs to the RNA methyltransferase TrmD family. In terms of assembly, homodimer.

Its subcellular location is the cytoplasm. It catalyses the reaction guanosine(37) in tRNA + S-adenosyl-L-methionine = N(1)-methylguanosine(37) in tRNA + S-adenosyl-L-homocysteine + H(+). Functionally, specifically methylates guanosine-37 in various tRNAs. This Clostridium novyi (strain NT) protein is tRNA (guanine-N(1)-)-methyltransferase.